Here is a 444-residue protein sequence, read N- to C-terminus: UDP-N-acetylmuramate--L-alanine ligase (444 aa).

ATP is bound at residue 111–117 (GAHGKTS).

This sequence belongs to the MurCDEF family.

The protein resides in the cytoplasm. It catalyses the reaction UDP-N-acetyl-alpha-D-muramate + L-alanine + ATP = UDP-N-acetyl-alpha-D-muramoyl-L-alanine + ADP + phosphate + H(+). The protein operates within cell wall biogenesis; peptidoglycan biosynthesis. In terms of biological role, cell wall formation. The polypeptide is UDP-N-acetylmuramate--L-alanine ligase (Leuconostoc citreum (strain KM20)).